Consider the following 250-residue polypeptide: Probable dihydroorotate dehydrogenase B (NAD(+)), electron transfer subunit (250 aa).

In terms of domain architecture, FAD-binding FR-type spans M1 to I89. The [2Fe-2S] cluster site is built by C200, C205, C208, and C216.

This sequence belongs to the PyrK family. In terms of assembly, heterotetramer of 2 PyrK and 2 PyrD type B subunits. [2Fe-2S] cluster is required as a cofactor. FAD serves as cofactor.

The protein operates within pyrimidine metabolism; UMP biosynthesis via de novo pathway; orotate from (S)-dihydroorotate (NAD(+) route): step 1/1. Functionally, responsible for channeling the electrons from the oxidation of dihydroorotate from the FMN redox center in the PyrD type B subunit to the ultimate electron acceptor NAD(+). The sequence is that of Probable dihydroorotate dehydrogenase B (NAD(+)), electron transfer subunit from Thermoplasma acidophilum (strain ATCC 25905 / DSM 1728 / JCM 9062 / NBRC 15155 / AMRC-C165).